Reading from the N-terminus, the 472-residue chain is MNAVTDKSVADYIVADMALAGWGRRELAIAETEMPGLMAIRDEYAASQPLKGARIAGSLHMTIQTGVLIETLVALGAEVRWASCNIFSTQDHAAAAIAATGTPVFAIKGETLEEYWQYTHKIFEWPEGRHANMILDDGGDATLLLHLGARAEQDISVLAKPGSEEERVLFAAIKETLGRDPKWYSTRLAQIKGVTEETTTGVHRLYQMSQKGELAFAAINVNDSVTKSKFDNLYGCRESLVDGIKRATDVMVAGKIAVVAGYGDVGKGCAQALVALRAQVWVTEIDPICALQAAMEGFKVVTMEEAAAHADIFVTATGNYHVITRQHMEAMKDQAIVCNIGHFDNEIDVAGLENCQWEEIKPQVDHVIFPDGKRIILLAKGRLVNLGCATGHPSFVMSSSFANQTIAQIELFTRNEAYTTGQVYVLPKHLDEKVARLHLKKLGVKLSTLSKQQADYIGVPVEGPFKPDHYRY.

Residues Thr-62, Asp-137, and Glu-197 each coordinate substrate. 198 to 200 (TTT) serves as a coordination point for NAD(+). 2 residues coordinate substrate: Lys-227 and Asp-231. NAD(+) contacts are provided by residues Asn-232, 261–266 (GYGDVG), Glu-284, Asn-319, 340–342 (IGH), and Asn-385.

Belongs to the adenosylhomocysteinase family. Requires NAD(+) as cofactor.

It is found in the cytoplasm. It carries out the reaction S-adenosyl-L-homocysteine + H2O = L-homocysteine + adenosine. Its pathway is amino-acid biosynthesis; L-homocysteine biosynthesis; L-homocysteine from S-adenosyl-L-homocysteine: step 1/1. Functionally, may play a key role in the regulation of the intracellular concentration of adenosylhomocysteine. The chain is Adenosylhomocysteinase from Bordetella pertussis (strain Tohama I / ATCC BAA-589 / NCTC 13251).